Here is a 315-residue protein sequence, read N- to C-terminus: Probable HTH-type transcriptional regulator SinR (315 aa).

The HTH lysR-type domain occupies 8–65 (RGMRDWMIFIKVAEVGNLSRAARELDISISAVSKSLSRLENSIEVTLLRRDSHHLELT). Positions 25–44 (LSRAARELDISISAVSKSLS) form a DNA-binding region, H-T-H motif.

The protein belongs to the LysR transcriptional regulatory family.

Probable regulatory protein. Its target is not known. In Salmonella typhimurium (strain LT2 / SGSC1412 / ATCC 700720), this protein is Probable HTH-type transcriptional regulator SinR (sinR).